The primary structure comprises 225 residues: Peroxiredoxin-2E-2, chloroplastic (225 aa).

A chloroplast-targeting transit peptide spans 1 to 42 (MAAPTAAALSTLSTASVTSGKRFITSSFSLSFSSRPLATGVR). The Thioredoxin domain maps to 63–225 (IAVGDKLPDA…SSAEEMLKAL (163 aa)). The active-site Cysteine sulfenic acid (-SOH) intermediate is cysteine 111.

This sequence belongs to the peroxiredoxin family. Prx5 subfamily. Monomer.

It localises to the plastid. The protein localises to the chloroplast stroma. It catalyses the reaction [glutaredoxin]-dithiol + a hydroperoxide = [glutaredoxin]-disulfide + an alcohol + H2O. In terms of biological role, thiol-specific peroxidase that catalyzes the reduction of hydrogen peroxide and organic hydroperoxides to water and alcohols, respectively. Plays a role in cell protection against oxidative stress by detoxifying peroxides. May be involved in chloroplast redox homeostasis. The protein is Peroxiredoxin-2E-2, chloroplastic (PRXIIE-2) of Oryza sativa subsp. japonica (Rice).